We begin with the raw amino-acid sequence, 390 residues long: L-seryl-tRNA(Sec) selenium transferase (390 aa).

Lys-225 carries the post-translational modification N6-(pyridoxal phosphate)lysine.

It belongs to the SelA family. Pyridoxal 5'-phosphate is required as a cofactor.

It localises to the cytoplasm. It carries out the reaction L-seryl-tRNA(Sec) + selenophosphate + H(+) = L-selenocysteinyl-tRNA(Sec) + phosphate. The protein operates within aminoacyl-tRNA biosynthesis; selenocysteinyl-tRNA(Sec) biosynthesis; selenocysteinyl-tRNA(Sec) from L-seryl-tRNA(Sec) (bacterial route): step 1/1. Functionally, converts seryl-tRNA(Sec) to selenocysteinyl-tRNA(Sec) required for selenoprotein biosynthesis. This Helicobacter pylori (strain P12) protein is L-seryl-tRNA(Sec) selenium transferase.